The following is a 472-amino-acid chain: uncharacterized protein (472 aa).

It to B.subtilis YcdC.

This is an uncharacterized protein from Bacillus subtilis (strain 168).